The sequence spans 358 residues: PDZ and LIM domain protein 3 (358 aa).

The region spanning 1–84 (MPQNVLLPGP…QLCLKIDRAE (84 aa)) is the PDZ domain. Disordered stretches follow at residues 126–155 (FILP…SVST) and 237–274 (DTEH…RAPV). Low complexity predominate over residues 129 to 146 (PGRSSGSSTPSGFDPGSG). Positions 288 to 347 (PICDRCGNGIVGTVVKAKDKLRHPDCFVCSDCNLNLKQKGYFFVEGQLYCEAHARARMRP) constitute an LIM zinc-binding domain.

It localises to the cytoplasm. Its subcellular location is the myofibril. The protein localises to the sarcomere. The protein resides in the z line. Its function is as follows. May play a role in the organization of actin filament arrays within muscle cells. The chain is PDZ and LIM domain protein 3 (pdlim3) from Xenopus laevis (African clawed frog).